The sequence spans 501 residues: NAD(P)H-quinone oxidoreductase chain 4, chloroplastic (501 aa).

14 consecutive transmembrane segments (helical) span residues 4–24 (FPWLTIIVVLPISAGSLILFL), 35–55 (YTICICILELLITTYAFCYHF), 84–104 (GLSIGPILLTGFITTLATLAA), 111–129 (SRLLHLLMLAMYSGQIGSF), 134–154 (LLLFFIMWELELIPVYLLLSM), 168–188 (FILYTAGGSIFLLMGVLGMDL), 209–229 (ALEILFYFGFIIAFAVKSPII), 243–263 (HYSTCMLLAGILLKMGAYGLI), 273–293 (AHSIFSPWLVIVGTMQIIYAA), 306–326 (IAYSSVSHMGFIIIGIGSITD), 331–351 (GAILQIISHGFIGAALFFLAG), 387–407 (LALPGMSGFVAELIVFFGIIT), 417–437 (ILITFVMAIGMILTPIYSLSM), and 463–483 (LFVSISIFLPVIGIGIYPDFV).

The protein belongs to the complex I subunit 4 family.

It localises to the plastid. Its subcellular location is the chloroplast thylakoid membrane. The catalysed reaction is a plastoquinone + NADH + (n+1) H(+)(in) = a plastoquinol + NAD(+) + n H(+)(out). It carries out the reaction a plastoquinone + NADPH + (n+1) H(+)(in) = a plastoquinol + NADP(+) + n H(+)(out). This Buxus microphylla (Littleleaf boxwood) protein is NAD(P)H-quinone oxidoreductase chain 4, chloroplastic.